Here is a 943-residue protein sequence, read N- to C-terminus: WD repeat-containing protein 3 (943 aa).

5 WD repeats span residues 21-60, 63-102, 105-144, 147-186, and 189-228; these read SQKGNIVFVTLRGEKGRYVAVPACEHVFIWDLRKGEKILI, GLKQEVTCLCPSPDGLHLAVGYEDGSIRIFSLLSGEGNVT, GHKAAITTLKYDQLGGRLASGSKDTDIIVWDVINESGLYR, GHKDAITQALFLREKNLLVTSGKDTMVKWWDLDTQHCFKT, and GHRTEVWGLVLLSEEKRLITGASDSELRVWDIAYLQEIED. Serine 240 and serine 241 each carry phosphoserine. Threonine 257 bears the Phosphothreonine mark. The stretch at 277–316 is one WD 6 repeat; the sequence is EGRDRVVNLAVDKTGRILACHGTDSVLELFCILSKKEIQK. Positions 326–345 are disordered; the sequence is RKKAKLHSSKGEEEDPEVNV. WD repeat units lie at residues 413 to 451, 453 to 493, 494 to 533, 547 to 586, 589 to 630, 631 to 670, and 673 to 712; these read GHRSDVRTLSFSSDNIAVLSAAADSIKIWNRSTLQCIRT, TCEY…ETID, AHDGALWSMSLSPDQRGFVTGGADKSVKFWDFELVKDENS, QLDEDVLCVSYSPNQKLLAVSLLDCTVKIFYVDTLKFFLS, GHKL…KSLF, AHDDSVMYLQFVPKSHLFFTAGKDHKIKQWDADKFEHIQT, and GHHQEIWCLAVSPSGDYVVSSSHDKSLRLWERTREPLILE. Glycyl lysine isopeptide (Lys-Gly) (interchain with G-Cter in SUMO2) cross-links involve residues lysine 474 and lysine 529. Residue serine 726 is modified to Phosphoserine.

It belongs to the WD repeat WDR3/UTP12 family. As to quaternary structure, part of the small subunit (SSU) processome, composed of more than 70 proteins and the RNA chaperone small nucleolar RNA (snoRNA) U3. As to expression, ubiquitous.

The protein resides in the nucleus. It localises to the nucleolus. Functionally, part of the small subunit (SSU) processome, first precursor of the small eukaryotic ribosomal subunit. During the assembly of the SSU processome in the nucleolus, many ribosome biogenesis factors, an RNA chaperone and ribosomal proteins associate with the nascent pre-rRNA and work in concert to generate RNA folding, modifications, rearrangements and cleavage as well as targeted degradation of pre-ribosomal RNA by the RNA exosome. In Homo sapiens (Human), this protein is WD repeat-containing protein 3.